The primary structure comprises 781 residues: Chloride channel protein CLC-f (781 aa).

2 disordered regions span residues 1-41 (MSSG…QSPA) and 79-98 (RERH…EEDG). The segment covering 10–20 (NEDRHLLRSTD) has biased composition (basic and acidic residues). 12 helical membrane passes run 129–149 (WALL…VAGF), 184–204 (ILLI…LLEI), 221–241 (FLAG…LGTG), 250–270 (SVDI…NNRE), 279–299 (GAAS…FFAI), 314–334 (FTTA…NALL), 350–370 (AAEL…SVVF), 388–408 (FGLP…IIAL), 433–453 (APGI…TALC), 457–477 (GLVG…GAVF), 502–522 (ALVG…TSVL), and 523–543 (LLFE…AVGL). The tract at residues 553 to 584 (QGKESDSSEGRSTGRGYSSLSPSERKTEGVWR) is disordered. A compositionally biased stretch (basic and acidic residues) spans 575-584 (SERKTEGVWR). 2 CBS domains span residues 621–677 (MSKN…NAST) and 699–763 (QERG…EMSR). Residues 726–746 (QLPVVKRGEVIHKGKRRKLLG) traverse the membrane as a helical segment.

It belongs to the chloride channel (TC 2.A.49) family. Homodimer.

The protein resides in the membrane. In terms of biological role, voltage-gated chloride channel. This Arabidopsis thaliana (Mouse-ear cress) protein is Chloride channel protein CLC-f (CLC-F).